The sequence spans 495 residues: Amidophosphoribosyltransferase (495 aa).

The disordered stretch occupies residues 1-22 (MFPPSSDLTELNDGQPLSGHHA). Positions 1 to 28 (MFPPSSDLTELNDGQPLSGHHADKPEEA) are excised as a propeptide. Cys29 serves as the catalytic Nucleophile. Residues 29–254 (CGVFGIYAPE…AGELVHITES (226 aa)) form the Glutamine amidotransferase type-2 domain. Cys270 is a binding site for [4Fe-4S] cluster. Residues Ser317, Asp379, and Asp380 each coordinate Mg(2+). Cys416, Cys467, and Cys470 together coordinate [4Fe-4S] cluster.

The protein in the C-terminal section; belongs to the purine/pyrimidine phosphoribosyltransferase family. It depends on Mg(2+) as a cofactor. The cofactor is [4Fe-4S] cluster.

The enzyme catalyses 5-phospho-beta-D-ribosylamine + L-glutamate + diphosphate = 5-phospho-alpha-D-ribose 1-diphosphate + L-glutamine + H2O. It functions in the pathway purine metabolism; IMP biosynthesis via de novo pathway; N(1)-(5-phospho-D-ribosyl)glycinamide from 5-phospho-alpha-D-ribose 1-diphosphate: step 1/2. Functionally, catalyzes the formation of phosphoribosylamine from phosphoribosylpyrophosphate (PRPP) and glutamine. The chain is Amidophosphoribosyltransferase from Synechocystis sp. (strain ATCC 27184 / PCC 6803 / Kazusa).